We begin with the raw amino-acid sequence, 240 residues long: Enoyl-CoA delta isomerase 2, peroxisomal (240 aa).

The short motif at 238–240 (PKL) is the Microbody targeting signal element.

Belongs to the enoyl-CoA hydratase/isomerase family.

The protein resides in the peroxisome. The enzyme catalyses a (3Z)-enoyl-CoA = a 4-saturated (2E)-enoyl-CoA. It catalyses the reaction a (3E)-enoyl-CoA = a 4-saturated (2E)-enoyl-CoA. Its pathway is lipid metabolism; fatty acid beta-oxidation. In terms of biological role, able to isomerize both 3-cis and 3-trans double bonds into the 2-trans form in a range of enoyl-CoA species. Essential for the beta oxidation of unsaturated fatty acids. Involved with IBR1 and IBR3 in the peroxisomal beta-oxidation of indole-3-butyric acid (IBA) to form indole-3-acetic acid (IAA), a biologically active auxin. The sequence is that of Enoyl-CoA delta isomerase 2, peroxisomal from Arabidopsis thaliana (Mouse-ear cress).